The primary structure comprises 691 residues: Elongation factor G (691 aa).

The 276-residue stretch at 6–281 folds into the tr-type G domain; sequence SRYRNIGIMA…GVVDFLPSPI (276 aa). Residues 15 to 22, 79 to 83, and 133 to 136 each bind GTP; these read AHIDAGKT, DTPGH, and NKMD.

The protein belongs to the TRAFAC class translation factor GTPase superfamily. Classic translation factor GTPase family. EF-G/EF-2 subfamily.

It localises to the cytoplasm. Its function is as follows. Catalyzes the GTP-dependent ribosomal translocation step during translation elongation. During this step, the ribosome changes from the pre-translocational (PRE) to the post-translocational (POST) state as the newly formed A-site-bound peptidyl-tRNA and P-site-bound deacylated tRNA move to the P and E sites, respectively. Catalyzes the coordinated movement of the two tRNA molecules, the mRNA and conformational changes in the ribosome. This Wolbachia pipientis subsp. Culex pipiens (strain wPip) protein is Elongation factor G.